The chain runs to 395 residues: Phosphoglycerate kinase (395 aa).

Residues 20-22 (DFN), R36, 59-62 (HLGR), R120, and R157 each bind substrate. ATP is bound by residues K208, G296, E327, and 353–356 (GGDT).

The protein belongs to the phosphoglycerate kinase family. In terms of assembly, monomer.

It localises to the cytoplasm. It catalyses the reaction (2R)-3-phosphoglycerate + ATP = (2R)-3-phospho-glyceroyl phosphate + ADP. The protein operates within carbohydrate degradation; glycolysis; pyruvate from D-glyceraldehyde 3-phosphate: step 2/5. This is Phosphoglycerate kinase from Tropheryma whipplei (strain Twist) (Whipple's bacillus).